The sequence spans 303 residues: uncharacterized protein (303 aa).

4 helical membrane passes run 55–77 (FLVK…LFIQ), 92–111 (PAVF…TKII), 208–230 (FSLP…ATSL), and 240–257 (IPHI…KILI).

The protein localises to the cell membrane. This is an uncharacterized protein from Bacillus subtilis (strain 168).